The following is a 343-amino-acid chain: Tumor necrosis factor receptor superfamily member wgn (343 aa).

Disordered regions lie at residues 1 to 44 and 74 to 96; these read MMPP…IGGS and SSAA…SIAS. The first 76 residues, 1-76, serve as a signal peptide directing secretion; the sequence is MMPPRLPGGH…ATSASSSSSA (76 aa). A compositionally biased stretch (low complexity) spans 13-24; sequence AMRSRSSSSGHH. Residues 29–39 are compositionally biased toward basic residues; the sequence is FHKRRRRRQQH. The Extracellular portion of the chain corresponds to 77-201; the sequence is ANTDIAPPDP…AAWVLDWQTG (125 aa). The stretch at 99–137 is one TNFR-Cys repeat; sequence PCAPQHWWDSQRDRCTPCTRCQGEMIPLRPCQLHTDTIC. 3 disulfides stabilise this stretch: cysteine 100/cysteine 113, cysteine 116/cysteine 129, and cysteine 119/cysteine 137. The chain crosses the membrane as a helical span at residues 202–222; the sequence is VLYVAVLTCLVFFSVAACILI. Topologically, residues 223-343 are cytoplasmic; it reads HHMRQWRRME…GVRGCSGLKG (121 aa). Positions 225-257 form a coiled coil; the sequence is MRQWRRMERRLDQDVEELSTKLMAKLAEVQSLD.

Monomer. Interacts (via extracellular cystein-rich domain) with egr (via secreted TNF-homology soluble form); forms heterohexamers when 3 copies associate with egr trimers. Interacts with Traf6. Interacts with Moe. In terms of tissue distribution, expressed in the adult midgut; under normal conditions expressed at higher levels than the other TNF receptor grnd.

It localises to the cell membrane. Its subcellular location is the cytoplasmic vesicle membrane. Its function is as follows. Receptor for egr. Involved in induction of apoptosis by triggering JNK signaling. Mediates the tumor suppressor activity of egr which eliminates oncogenic cells from epithelia, thereby maintaining epithelial integrity. Following UV-induced epidermal damage, binds to egr released from apoptotic epidermal cells and plays a role in development of thermal allodynia, a responsiveness to subthreshold thermal stimuli which are not normally perceived as noxious. Together with Moe, involved in control of axon targeting of R8 and R2-R5 photoreceptors, independent of egr. The protein is Tumor necrosis factor receptor superfamily member wgn of Drosophila melanogaster (Fruit fly).